The following is a 190-amino-acid chain: UPF0301 protein TC_0483 (190 aa).

The protein belongs to the UPF0301 (AlgH) family.

The protein is UPF0301 protein TC_0483 of Chlamydia muridarum (strain MoPn / Nigg).